The primary structure comprises 100 residues: Urease subunit gamma (100 aa).

The protein belongs to the urease gamma subunit family. Heterotrimer of UreA (gamma), UreB (beta) and UreC (alpha) subunits. Three heterotrimers associate to form the active enzyme.

The protein resides in the cytoplasm. The enzyme catalyses urea + 2 H2O + H(+) = hydrogencarbonate + 2 NH4(+). It functions in the pathway nitrogen metabolism; urea degradation; CO(2) and NH(3) from urea (urease route): step 1/1. The chain is Urease subunit gamma from Prochlorococcus marinus (strain MIT 9301).